Consider the following 546-residue polypeptide: 2-succinyl-5-enolpyruvyl-6-hydroxy-3-cyclohexene-1-carboxylate synthase (546 aa).

It belongs to the TPP enzyme family. MenD subfamily. In terms of assembly, homodimer. The cofactor is Mg(2+). Mn(2+) serves as cofactor. Thiamine diphosphate is required as a cofactor.

The catalysed reaction is isochorismate + 2-oxoglutarate + H(+) = 5-enolpyruvoyl-6-hydroxy-2-succinyl-cyclohex-3-ene-1-carboxylate + CO2. It participates in quinol/quinone metabolism; 1,4-dihydroxy-2-naphthoate biosynthesis; 1,4-dihydroxy-2-naphthoate from chorismate: step 2/7. It functions in the pathway quinol/quinone metabolism; menaquinone biosynthesis. Its function is as follows. Catalyzes the thiamine diphosphate-dependent decarboxylation of 2-oxoglutarate and the subsequent addition of the resulting succinic semialdehyde-thiamine pyrophosphate anion to isochorismate to yield 2-succinyl-5-enolpyruvyl-6-hydroxy-3-cyclohexene-1-carboxylate (SEPHCHC). The sequence is that of 2-succinyl-5-enolpyruvyl-6-hydroxy-3-cyclohexene-1-carboxylate synthase from Mycolicibacterium smegmatis (strain ATCC 700084 / mc(2)155) (Mycobacterium smegmatis).